The following is a 167-amino-acid chain: Ribosome-binding factor A (167 aa).

The disordered stretch occupies residues 122 to 167 (LAASAKHAGEADPYKGDSPEDIDEDDFDEEDTDLSGDNDLDEDANR). The span at 128–139 (HAGEADPYKGDS) shows a compositional bias: basic and acidic residues. The segment covering 140 to 167 (PEDIDEDDFDEEDTDLSGDNDLDEDANR) has biased composition (acidic residues).

This sequence belongs to the RbfA family. Monomer. Binds 30S ribosomal subunits, but not 50S ribosomal subunits or 70S ribosomes.

It is found in the cytoplasm. Its function is as follows. One of several proteins that assist in the late maturation steps of the functional core of the 30S ribosomal subunit. Associates with free 30S ribosomal subunits (but not with 30S subunits that are part of 70S ribosomes or polysomes). Required for efficient processing of 16S rRNA. May interact with the 5'-terminal helix region of 16S rRNA. This Paenarthrobacter aurescens (strain TC1) protein is Ribosome-binding factor A.